Consider the following 98-residue polypeptide: MPTETERCIESLIAVFQKYSGKDGNSCHLSKTEFLSFMNTELAAFTKNQKDPGVLDRMMKKLDLNSDGQLDFQEFLNLIGGLAIACHESFLQTSQKRI.

Threonine 5 is subject to Phosphothreonine. EF-hand domains are found at residues 12-47 (LIAV…AFTK) and 50-85 (KDPG…LAIA). Lysine 22 carries the N6-acetyllysine modification. Residues serine 26, histidine 28, glutamate 33, aspartate 63, asparagine 65, aspartate 67, glutamine 69, and glutamate 74 each contribute to the Ca(2+) site.

It belongs to the S-100 family. In terms of assembly, homodimer; disulfide-linked. Post-translationally, phosphorylation at Thr-5 significantly suppresses homodimerization and promotes association with NCL/nucleolin which induces nuclear translocation.

The protein resides in the cytoplasm. The protein localises to the nucleus. Facilitates the differentiation and the cornification of keratinocytes. The polypeptide is Protein S100-A11 (S100a11) (Rattus norvegicus (Rat)).